A 376-amino-acid polypeptide reads, in one-letter code: D-alanine--D-alanine ligase B (376 aa).

The ATP-grasp domain maps to 155 to 361 (KRLMRDAGLP…QTDLMDKLIA (207 aa)). An ATP-binding site is contributed by 184–239 (AALGTPDLFVKPANLGSSVGVSRARSEEEFAASCALAFRYDRKILVEQALNGAREI). Residues Asp316, Glu328, and Asn330 each coordinate Mg(2+).

It belongs to the D-alanine--D-alanine ligase family. The cofactor is Mg(2+). It depends on Mn(2+) as a cofactor.

Its subcellular location is the cytoplasm. The enzyme catalyses 2 D-alanine + ATP = D-alanyl-D-alanine + ADP + phosphate + H(+). It functions in the pathway cell wall biogenesis; peptidoglycan biosynthesis. Its function is as follows. Cell wall formation. The chain is D-alanine--D-alanine ligase B from Bradyrhizobium diazoefficiens (strain JCM 10833 / BCRC 13528 / IAM 13628 / NBRC 14792 / USDA 110).